The following is a 239-amino-acid chain: tRNA (guanine-N(1)-)-methyltransferase (239 aa).

S-adenosyl-L-methionine contacts are provided by residues G108 and 128 to 133; that span reads VGNFIV.

It belongs to the RNA methyltransferase TrmD family. Homodimer.

It localises to the cytoplasm. It catalyses the reaction guanosine(37) in tRNA + S-adenosyl-L-methionine = N(1)-methylguanosine(37) in tRNA + S-adenosyl-L-homocysteine + H(+). Its function is as follows. Specifically methylates guanosine-37 in various tRNAs. This Helicobacter hepaticus (strain ATCC 51449 / 3B1) protein is tRNA (guanine-N(1)-)-methyltransferase.